We begin with the raw amino-acid sequence, 583 residues long: Orphan steroid hormone receptor 2 (583 aa).

Positions 84 to 159 form a DNA-binding region, nuclear receptor; the sequence is IELCAVCGDK…MGMKSDSVQC (76 aa). 2 consecutive NR C4-type zinc fingers follow at residues 87–107 and 123–142; these read CAVC…CEGC and CRGN…CQYC. One can recognise an NR LBD domain in the interval 248–563; it reads TLASVVTSLA…SIIPYILRME (316 aa).

This sequence belongs to the nuclear hormone receptor family. NR2 subfamily. As to quaternary structure, binds DNA as a monomer. As to expression, expressed uniformly in the early embryo. In contrast, larval expression is localized to the epaulettes and mouth epithelium. Expressed in multiple adult organs including lantern muscle, tubefeet, intestine, coelomocytes and gonads. In the adult ovaries and testes, expression is specifically localized to the smooth muscle epithelial layer of cells which surround the ovarioles and acini, respectively (at protein level).

It localises to the cytoplasm. The protein localises to the nucleus. In terms of biological role, orphan nuclear receptor. Binds to the hormone response element in the upstream promoter region of the CYIIIB gene in vitro. Both isoform 1 and isoform 2 bind DNA. This chain is Orphan steroid hormone receptor 2, found in Strongylocentrotus purpuratus (Purple sea urchin).